The primary structure comprises 248 residues: Triosephosphate isomerase (248 aa).

9-11 (NWK) contributes to the substrate binding site. Catalysis depends on histidine 92, which acts as the Electrophile. Glutamate 164 acts as the Proton acceptor in catalysis. Substrate is bound by residues glycine 170, serine 210, and 231–232 (GG).

It belongs to the triosephosphate isomerase family. As to quaternary structure, homodimer.

Its subcellular location is the cytoplasm. The enzyme catalyses D-glyceraldehyde 3-phosphate = dihydroxyacetone phosphate. It participates in carbohydrate biosynthesis; gluconeogenesis. Its pathway is carbohydrate degradation; glycolysis; D-glyceraldehyde 3-phosphate from glycerone phosphate: step 1/1. Involved in the gluconeogenesis. Catalyzes stereospecifically the conversion of dihydroxyacetone phosphate (DHAP) to D-glyceraldehyde-3-phosphate (G3P). The chain is Triosephosphate isomerase from Mycoplasma capricolum subsp. capricolum (strain California kid / ATCC 27343 / NCTC 10154).